The chain runs to 201 residues: Small ribosomal subunit protein uS4 (201 aa).

Residues 1–42 form a disordered region; it reads MARYTGPVTRKSRRLGTDLVGGDQSFEKRPYPPGQHGRARIK. One can recognise an S4 RNA-binding domain in the interval 91 to 157; that stretch reads SRLDNVVYRA…VPFQIARETA (67 aa).

It belongs to the universal ribosomal protein uS4 family. As to quaternary structure, part of the 30S ribosomal subunit. Contacts protein S5. The interaction surface between S4 and S5 is involved in control of translational fidelity.

Functionally, one of the primary rRNA binding proteins, it binds directly to 16S rRNA where it nucleates assembly of the body of the 30S subunit. With S5 and S12 plays an important role in translational accuracy. The protein is Small ribosomal subunit protein uS4 of Mycobacterium marinum (strain ATCC BAA-535 / M).